The following is a 278-amino-acid chain: 4-deoxy-L-threo-5-hexosulose-uronate ketol-isomerase (278 aa).

4 residues coordinate Zn(2+): His196, His198, Glu203, and His245.

Belongs to the KduI family. Requires Zn(2+) as cofactor.

The enzyme catalyses 5-dehydro-4-deoxy-D-glucuronate = 3-deoxy-D-glycero-2,5-hexodiulosonate. It participates in glycan metabolism; pectin degradation; 2-dehydro-3-deoxy-D-gluconate from pectin: step 4/5. In terms of biological role, catalyzes the isomerization of 5-dehydro-4-deoxy-D-glucuronate to 3-deoxy-D-glycero-2,5-hexodiulosonate. The protein is 4-deoxy-L-threo-5-hexosulose-uronate ketol-isomerase of Salmonella paratyphi A (strain ATCC 9150 / SARB42).